The primary structure comprises 118 residues: UPF0329 protein ECU03_0030/ECU05_0040/ECU06_0010/ECU06_1710/ECU11_0010 (118 aa).

The protein belongs to the UPF0329 family.

The chain is UPF0329 protein ECU03_0030/ECU05_0040/ECU06_0010/ECU06_1710/ECU11_0010 from Encephalitozoon cuniculi (strain GB-M1) (Microsporidian parasite).